The following is a 166-amino-acid chain: NAD(P)H-quinone oxidoreductase subunit I, chloroplastic (166 aa).

4Fe-4S ferredoxin-type domains follow at residues 55–84 (GRIH…VDWK) and 95–124 (LNYS…MTEE). 8 residues coordinate [4Fe-4S] cluster: C64, C67, C70, C74, C104, C107, C110, and C114.

Belongs to the complex I 23 kDa subunit family. NDH is composed of at least 16 different subunits, 5 of which are encoded in the nucleus. It depends on [4Fe-4S] cluster as a cofactor.

It is found in the plastid. The protein resides in the chloroplast thylakoid membrane. The catalysed reaction is a plastoquinone + NADH + (n+1) H(+)(in) = a plastoquinol + NAD(+) + n H(+)(out). It catalyses the reaction a plastoquinone + NADPH + (n+1) H(+)(in) = a plastoquinol + NADP(+) + n H(+)(out). Its function is as follows. NDH shuttles electrons from NAD(P)H:plastoquinone, via FMN and iron-sulfur (Fe-S) centers, to quinones in the photosynthetic chain and possibly in a chloroplast respiratory chain. The immediate electron acceptor for the enzyme in this species is believed to be plastoquinone. Couples the redox reaction to proton translocation, and thus conserves the redox energy in a proton gradient. The polypeptide is NAD(P)H-quinone oxidoreductase subunit I, chloroplastic (Lasianthaea macrocephala (Lipochaeta macrocephala)).